Reading from the N-terminus, the 744-residue chain is Adenosylcobalamin-dependent ribonucleoside-triphosphate reductase (744 aa).

The cysteines at positions 120 and 424 are disulfide-linked. The tract at residues 148–159 is effector region-1; the sequence is SMPFSFLFDQLM. The interval 169-318 is effector region-2; sequence VDENINQIPK…ICNLIGKTVV (150 aa). Catalysis depends on residues C413 and E415. The adenosylcobalamin-binding-1 stretch occupies residues 570–631; that stretch reads FHYSGYLIQR…SDNFASAGTV (62 aa). The segment at 690–729 is adenosylcobalamin-binding-2; it reads LKQAPKEPISKEKYEKADNHITGNVEIVFEQTNEDQKGLE.

Belongs to the class II ribonucleoside-triphosphate reductase family. As to quaternary structure, monomer. Adenosylcob(III)alamin is required as a cofactor.

The catalysed reaction is a 2'-deoxyribonucleoside 5'-triphosphate + [thioredoxin]-disulfide + H2O = a ribonucleoside 5'-triphosphate + [thioredoxin]-dithiol. Its activity is regulated as follows. Allosterically regulated by ATP and dNTP. This Lactobacillus gasseri (strain ATCC 33323 / DSM 20243 / BCRC 14619 / CIP 102991 / JCM 1131 / KCTC 3163 / NCIMB 11718 / NCTC 13722 / AM63) protein is Adenosylcobalamin-dependent ribonucleoside-triphosphate reductase (rtpR).